A 467-amino-acid polypeptide reads, in one-letter code: Glutamate--tRNA ligase (467 aa).

Positions 9-19 match the 'HIGH' region motif; the sequence is PSPTGFLHIGG. The 'KMSKS' region signature appears at 250–254; sequence KLSKR. Lys-253 is a binding site for ATP.

This sequence belongs to the class-I aminoacyl-tRNA synthetase family. Glutamate--tRNA ligase type 1 subfamily. As to quaternary structure, monomer.

It localises to the cytoplasm. The enzyme catalyses tRNA(Glu) + L-glutamate + ATP = L-glutamyl-tRNA(Glu) + AMP + diphosphate. In terms of biological role, catalyzes the attachment of glutamate to tRNA(Glu) in a two-step reaction: glutamate is first activated by ATP to form Glu-AMP and then transferred to the acceptor end of tRNA(Glu). The sequence is that of Glutamate--tRNA ligase from Mesomycoplasma hyopneumoniae (strain 232) (Mycoplasma hyopneumoniae).